We begin with the raw amino-acid sequence, 268 residues long: Tryptophan synthase alpha chain (268 aa).

Residues E49 and D60 each act as proton acceptor in the active site.

Belongs to the TrpA family. In terms of assembly, tetramer of two alpha and two beta chains.

The catalysed reaction is (1S,2R)-1-C-(indol-3-yl)glycerol 3-phosphate + L-serine = D-glyceraldehyde 3-phosphate + L-tryptophan + H2O. The protein operates within amino-acid biosynthesis; L-tryptophan biosynthesis; L-tryptophan from chorismate: step 5/5. In terms of biological role, the alpha subunit is responsible for the aldol cleavage of indoleglycerol phosphate to indole and glyceraldehyde 3-phosphate. The chain is Tryptophan synthase alpha chain from Xanthomonas axonopodis pv. citri (strain 306).